Reading from the N-terminus, the 722-residue chain is Ribosomal RNA large subunit methyltransferase K/L (722 aa).

The THUMP domain maps to 43 to 154 (IGLRACLWSR…GNEGRVGIDL (112 aa)).

The protein belongs to the methyltransferase superfamily. RlmKL family.

The protein resides in the cytoplasm. It carries out the reaction guanosine(2445) in 23S rRNA + S-adenosyl-L-methionine = N(2)-methylguanosine(2445) in 23S rRNA + S-adenosyl-L-homocysteine + H(+). It catalyses the reaction guanosine(2069) in 23S rRNA + S-adenosyl-L-methionine = N(2)-methylguanosine(2069) in 23S rRNA + S-adenosyl-L-homocysteine + H(+). Functionally, specifically methylates the guanine in position 2445 (m2G2445) and the guanine in position 2069 (m7G2069) of 23S rRNA. This Magnetococcus marinus (strain ATCC BAA-1437 / JCM 17883 / MC-1) protein is Ribosomal RNA large subunit methyltransferase K/L.